The chain runs to 278 residues: MAVAYADKPNHFINFPLTQFEGFVLNYKGLQFQLLDEGVDCKIQTAPHISLAMLDIQPEDYRSVDVAIQEVIDDMHWGEGFQIKFDNPHILGRCIVLDVKGVEELHDDLVNYIRDKGCVADQSRKWIGHCTIAQLTNAALSIKENVDFINSMQFNYKITINPSSPARLEIVKLGAEKKDGFYETIVSHWMGIRFEYNPPTDKLAMIMGYCCLEVVRKELEEGDLPENDDDAWFKLSYHYENNSWFFRHVYRKSFYFRKSCQNLDCNCLGFYESSVEED.

The protein belongs to the coronaviruses ns2a protein family.

This Bovine coronavirus (strain LY-138) (BCoV) protein is Non-structural protein 2a.